Consider the following 228-residue polypeptide: Sugar fermentation stimulation protein homolog (228 aa).

Belongs to the SfsA family.

The polypeptide is Sugar fermentation stimulation protein homolog (Desulfitobacterium hafniense (strain Y51)).